The following is a 134-amino-acid chain: Transcription antitermination protein NusB (134 aa).

Belongs to the NusB family.

Functionally, involved in transcription antitermination. Required for transcription of ribosomal RNA (rRNA) genes. Binds specifically to the boxA antiterminator sequence of the ribosomal RNA (rrn) operons. The chain is Transcription antitermination protein NusB from Shewanella amazonensis (strain ATCC BAA-1098 / SB2B).